An 80-amino-acid polypeptide reads, in one-letter code: MAVKKPENMTFEATIEELDSLVDQLENGDLALDDALRKFERGIALARAGQTKLSDAEQRVSILLSEDDEAPLNDFKPDSE.

Belongs to the XseB family. In terms of assembly, heterooligomer composed of large and small subunits.

It is found in the cytoplasm. The catalysed reaction is Exonucleolytic cleavage in either 5'- to 3'- or 3'- to 5'-direction to yield nucleoside 5'-phosphates.. Its function is as follows. Bidirectionally degrades single-stranded DNA into large acid-insoluble oligonucleotides, which are then degraded further into small acid-soluble oligonucleotides. The polypeptide is Exodeoxyribonuclease 7 small subunit (Vibrio parahaemolyticus serotype O3:K6 (strain RIMD 2210633)).